We begin with the raw amino-acid sequence, 153 residues long: MNIFEGKLIAEGLKVGIIVGRFNEFIGSKLLDGALDGLKRHGVNLEDIDVAWVPGAFEMPLIAKKMAKSPKYDAVICLGAVIKGSTSHYDYVCSEVSKGIANVSLETGKPVMFGVLTTNNIEQAIERAGTKAGNKGYECAVGAIEMANLIKEL.

Residues phenylalanine 22, 56–58, and 80–82 each bind 5-amino-6-(D-ribitylamino)uracil; these read AFE and AVI. 85–86 is a binding site for (2S)-2-hydroxy-3-oxobutyl phosphate; the sequence is ST. Residue histidine 88 is the Proton donor of the active site. Phenylalanine 113 lines the 5-amino-6-(D-ribitylamino)uracil pocket. Arginine 127 contributes to the (2S)-2-hydroxy-3-oxobutyl phosphate binding site.

It belongs to the DMRL synthase family.

The enzyme catalyses (2S)-2-hydroxy-3-oxobutyl phosphate + 5-amino-6-(D-ribitylamino)uracil = 6,7-dimethyl-8-(1-D-ribityl)lumazine + phosphate + 2 H2O + H(+). It participates in cofactor biosynthesis; riboflavin biosynthesis; riboflavin from 2-hydroxy-3-oxobutyl phosphate and 5-amino-6-(D-ribitylamino)uracil: step 1/2. Its function is as follows. Catalyzes the formation of 6,7-dimethyl-8-ribityllumazine by condensation of 5-amino-6-(D-ribitylamino)uracil with 3,4-dihydroxy-2-butanone 4-phosphate. This is the penultimate step in the biosynthesis of riboflavin. The protein is 6,7-dimethyl-8-ribityllumazine synthase of Clostridium botulinum (strain Alaska E43 / Type E3).